Consider the following 173-residue polypeptide: RNA polymerase sigma factor TcsR (173 aa).

The sigma-70 factor domain-4 stretch occupies residues 122–169 (IKDLTQNEKNILRKIYLHGLRESEISRELNISRQAVNKTHLRALEKLK). Positions 143–162 (ESEISRELNISRQAVNKTHL) form a DNA-binding region, H-T-H motif.

The protein belongs to the sigma-70 factor family.

Its function is as follows. Sigma factors are initiation factors that promote the attachment of RNA polymerase to specific initiation sites and are then released. Transcriptional regulator specifically required to activate expression of the toxin gene locus, composed of tcsL and tcdE/utxA. The sequence is that of RNA polymerase sigma factor TcsR from Paraclostridium sordellii (Clostridium sordellii).